The primary structure comprises 1286 residues: DNA-directed RNA polymerase 147 kDa polypeptide (1286 aa).

Belongs to the poxviridae DNA-directed RNA polymerase 147 kDa subunit family. The DNA-dependent RNA polymerase used for intermediate and late genes expression consists of eight subunits Rpo30/OPG66, Rpo7/OPG90, Rpo22/OPG103, Rpo147/OPG105, Rpo18/OPG119, Rpo19/OPG131, Rpo132/OPG151 and Rpo35/OPG156. The same holoenzyme, with the addition of the transcription-specificity factor OPG109, is used for early gene expression.

The protein localises to the virion. The catalysed reaction is RNA(n) + a ribonucleoside 5'-triphosphate = RNA(n+1) + diphosphate. In terms of biological role, part of the DNA-dependent RNA polymerase which catalyzes the transcription of viral DNA into RNA using the four ribonucleoside triphosphates as substrates. Responsible for the transcription of early, intermediate and late genes. DNA-dependent RNA polymerase associates with the early transcription factor (ETF), itself composed of OPG118 and OPG133, thereby allowing the early genes transcription. Late transcription, and probably also intermediate transcription, require newly synthesized RNA polymerase. This Monkeypox virus protein is DNA-directed RNA polymerase 147 kDa polypeptide (OPG105).